A 213-amino-acid polypeptide reads, in one-letter code: StAR-related lipid transfer protein 5 (213 aa).

The 213-residue stretch at 1-213 folds into the START domain; the sequence is MDLATAAQVS…LEKAVKKFFG (213 aa).

Functionally, may be involved in the intracellular transport of sterols or other lipids. May bind cholesterol or other sterols. This Bos taurus (Bovine) protein is StAR-related lipid transfer protein 5 (STARD5).